A 426-amino-acid chain; its full sequence is Molybdopterin molybdenumtransferase 1 (426 aa).

The protein belongs to the MoeA family. The cofactor is Mg(2+).

The enzyme catalyses adenylyl-molybdopterin + molybdate = Mo-molybdopterin + AMP + H(+). It functions in the pathway cofactor biosynthesis; molybdopterin biosynthesis. Catalyzes the insertion of molybdate into adenylated molybdopterin with the concomitant release of AMP. The chain is Molybdopterin molybdenumtransferase 1 (moeA1) from Mycobacterium tuberculosis (strain ATCC 25618 / H37Rv).